We begin with the raw amino-acid sequence, 549 residues long: Cytochrome bc1 complex cytochrome b subunit (549 aa).

A helical membrane pass occupies residues 54–74 (VCLYSFIIIILTGVYLTLFFH). 2 residues coordinate heme: histidine 118 and histidine 132. Helical transmembrane passes span 122 to 142 (ALIF…TGAF), 150 to 170 (WLFG…GYSL), and 182 to 202 (FMEG…FFLF). Positions 219 and 234 each coordinate heme. The next 5 helical transmembrane spans lie at 220–240 (ILLL…LVFY), 269–289 (AGGF…IATI), 334–354 (LVLG…AIAV), 389–409 (FGVA…NDLW), and 417–437 (INAI…VAFI).

This sequence belongs to the cytochrome b family. In terms of assembly, the cytochrome bc1 complex is composed of a cytochrome b (QcrB), the Rieske iron-sulfur protein (QcrA) and a diheme cytochrome c (QcrC) subunit. Requires heme as cofactor.

It localises to the cell membrane. The catalysed reaction is a quinol + 2 Fe(III)-[cytochrome c](out) = a quinone + 2 Fe(II)-[cytochrome c](out) + 2 H(+)(out). Cytochrome b subunit of the cytochrome bc1 complex, an essential component of the respiratory electron transport chain required for ATP synthesis. The bc1 complex catalyzes the oxidation of ubiquinol and the reduction of cytochrome c in the respiratory chain. The bc1 complex operates through a Q-cycle mechanism that couples electron transfer to generation of the proton gradient that drives ATP synthesis. The cytochrome b subunit contains two ubiquinol reactive sites: the oxidation (QP) site and the reduction (QN) site. This chain is Cytochrome bc1 complex cytochrome b subunit (qcrB), found in Streptomyces lividans.